The chain runs to 300 residues: Histone deacetylase HDT3 (300 aa).

The segment covering 98–112 (EDEMDLDSEDEDEEL) has biased composition (acidic residues). The disordered stretch occupies residues 98-300 (EDEMDLDSED…AHSKAKHGGK (203 aa)). A compositionally biased stretch (basic and acidic residues) spans 119–132 (ENGKADEKKQKSQE). Over residues 151 to 197 (DDDSDEDETDDSDEDETDDSDEGLSPEEGDDDSSDEDDTSDDEEEDT) the composition is skewed to acidic residues. Positions 198-211 (PTPKKPEVGKKRAA) are enriched in basic and acidic residues. A compositionally biased stretch (low complexity) spans 265-275 (SPKSAPKSGVP). A C2H2-type zinc finger spans residues 274–297 (VPCKSCSKSFISETAPQAHSKAKH). Polar residues predominate over residues 279–290 (CSKSFISETAPQ).

It belongs to the histone deacetylase HD2 family. In terms of assembly, multimer. Possibly forms a homotrimer with HDT1 and/or HDT2.

The protein localises to the nucleus. It localises to the nucleolus. Functionally, mediates the deacetylation of lysine residues on the N-terminal part of the core histones (H2A, H2B, H3 and H4). Histone deacetylation gives a tag for epigenetic repression and plays an important role in transcriptional regulation, cell cycle progression and developmental events. The polypeptide is Histone deacetylase HDT3 (HDT3) (Zea mays (Maize)).